The primary structure comprises 180 residues: Probable chorismate pyruvate-lyase (180 aa).

Residues Arg82, Leu120, and Glu165 each contribute to the substrate site.

The protein belongs to the UbiC family.

It is found in the cytoplasm. The catalysed reaction is chorismate = 4-hydroxybenzoate + pyruvate. It participates in cofactor biosynthesis; ubiquinone biosynthesis. Its function is as follows. Removes the pyruvyl group from chorismate, with concomitant aromatization of the ring, to provide 4-hydroxybenzoate (4HB) for the ubiquinone pathway. The protein is Probable chorismate pyruvate-lyase of Photobacterium profundum (strain SS9).